Here is a 318-residue protein sequence, read N- to C-terminus: tRNA pseudouridine synthase B (318 aa).

Asp-47 acts as the Nucleophile in catalysis.

It belongs to the pseudouridine synthase TruB family. Type 1 subfamily.

The catalysed reaction is uridine(55) in tRNA = pseudouridine(55) in tRNA. Responsible for synthesis of pseudouridine from uracil-55 in the psi GC loop of transfer RNAs. The protein is tRNA pseudouridine synthase B of Colwellia psychrerythraea (strain 34H / ATCC BAA-681) (Vibrio psychroerythus).